Reading from the N-terminus, the 108-residue chain is uncharacterized protein (108 aa).

Intrachain disulfides connect Cys-44–Cys-82, Cys-60–Cys-78, and Cys-63–Cys-91.

It belongs to the arthropod CHH/MIH/GIH/VIH hormone family.

This is an uncharacterized protein from Caenorhabditis elegans.